The sequence spans 341 residues: Phenylalanine--tRNA ligase alpha subunit (341 aa).

E254 lines the Mg(2+) pocket.

It belongs to the class-II aminoacyl-tRNA synthetase family. Phe-tRNA synthetase alpha subunit type 1 subfamily. In terms of assembly, tetramer of two alpha and two beta subunits. Requires Mg(2+) as cofactor.

Its subcellular location is the cytoplasm. The catalysed reaction is tRNA(Phe) + L-phenylalanine + ATP = L-phenylalanyl-tRNA(Phe) + AMP + diphosphate + H(+). This chain is Phenylalanine--tRNA ligase alpha subunit, found in Chlorobaculum parvum (strain DSM 263 / NCIMB 8327) (Chlorobium vibrioforme subsp. thiosulfatophilum).